Reading from the N-terminus, the 358-residue chain is Anhydro-N-acetylmuramic acid kinase (358 aa).

9 to 16 (GTSLDGVD) lines the ATP pocket.

It belongs to the anhydro-N-acetylmuramic acid kinase family.

It catalyses the reaction 1,6-anhydro-N-acetyl-beta-muramate + ATP + H2O = N-acetyl-D-muramate 6-phosphate + ADP + H(+). Its pathway is amino-sugar metabolism; 1,6-anhydro-N-acetylmuramate degradation. It functions in the pathway cell wall biogenesis; peptidoglycan recycling. Functionally, catalyzes the specific phosphorylation of 1,6-anhydro-N-acetylmuramic acid (anhMurNAc) with the simultaneous cleavage of the 1,6-anhydro ring, generating MurNAc-6-P. Is required for the utilization of anhMurNAc either imported from the medium or derived from its own cell wall murein, and thus plays a role in cell wall recycling. In Acidiphilium cryptum (strain JF-5), this protein is Anhydro-N-acetylmuramic acid kinase.